The sequence spans 195 residues: MSKQEKSNVEDKSLDIETAAQVETAQESASGALEELSVEEQLERAKDTIKELEDSCDQFKDEALRAKAEMENIRKRAERDVSNARKFGIEKFAKELLPVIDSIEQALKHEVKLEEAIAMKEGIELTAKMLVDILKKNGVEELDPKGEKFDPNLHEAMAMIPNPEFEDNTIFDVFQKGYMLNGRIVRAAKVVIVKN.

The protein belongs to the GrpE family. In terms of assembly, homodimer.

The protein localises to the cytoplasm. Functionally, participates actively in the response to hyperosmotic and heat shock by preventing the aggregation of stress-denatured proteins, in association with DnaK and GrpE. It is the nucleotide exchange factor for DnaK and may function as a thermosensor. Unfolded proteins bind initially to DnaJ; upon interaction with the DnaJ-bound protein, DnaK hydrolyzes its bound ATP, resulting in the formation of a stable complex. GrpE releases ADP from DnaK; ATP binding to DnaK triggers the release of the substrate protein, thus completing the reaction cycle. Several rounds of ATP-dependent interactions between DnaJ, DnaK and GrpE are required for fully efficient folding. The polypeptide is Protein GrpE (Francisella tularensis subsp. holarctica (strain FTNF002-00 / FTA)).